A 282-amino-acid chain; its full sequence is Pantothenate synthetase (282 aa).

30–37 serves as a coordination point for ATP; sequence MGFLHDGH. His37 (proton donor) is an active-site residue. Gln60 lines the (R)-pantoate pocket. A beta-alanine-binding site is contributed by Gln60. 146-149 is a binding site for ATP; sequence GQKD. Gln152 contacts (R)-pantoate. Residues Ile175 and 183-186 contribute to the ATP site; that span reads KSSR.

It belongs to the pantothenate synthetase family. In terms of assembly, homodimer.

It localises to the cytoplasm. It carries out the reaction (R)-pantoate + beta-alanine + ATP = (R)-pantothenate + AMP + diphosphate + H(+). Its pathway is cofactor biosynthesis; (R)-pantothenate biosynthesis; (R)-pantothenate from (R)-pantoate and beta-alanine: step 1/1. Its function is as follows. Catalyzes the condensation of pantoate with beta-alanine in an ATP-dependent reaction via a pantoyl-adenylate intermediate. In Campylobacter jejuni (strain RM1221), this protein is Pantothenate synthetase.